We begin with the raw amino-acid sequence, 409 residues long: Lysosome-associated membrane glycoprotein 1 (409 aa).

Positions 1–25 (MAAPGGARRRPLLLLLFAGLVHGAS) are cleaved as a signal peptide. The interval 26–187 (AVFVVKNGNG…SNFSREETRC (162 aa)) is first lumenal domain. At 26-374 (AVFVVKNGNG…EECQLDENSM (349 aa)) the chain is on the lumenal side. N-linked (GlcNAc...) asparagine glycosylation is found at Asn34, Asn59, Asn72, Asn80, Asn103, Asn117, Asn126, Asn146, Asn161, and Asn179. A disulfide bond links Cys38 and Cys76. Cys151 and Cys187 are disulfide-bonded. The interval 180-207 (FSREETRCEQDLPTPTTPPQPAPTPAPA) is disordered. Residues 188–219 (EQDLPTPTTPPQPAPTPAPASPAVFRYNVSGS) form a hinge region. Residues 194-207 (PTTPPQPAPTPAPA) show a composition bias toward pro residues. 8 N-linked (GlcNAc...) asparagine glycosylation sites follow: Asn215, Asn220, Asn241, Asn253, Asn260, Asn285, Asn299, and Asn314. Residues 220–374 (NGTCLLASMG…EECQLDENSM (155 aa)) form a second lumenal domain region. An intrachain disulfide couples Cys223 to Cys261. Cys330 and Cys367 form a disulfide bridge. Residues 375-398 (LIPIAVGGALAGLVLIVLLAYLIG) form a helical membrane-spanning segment. Topologically, residues 399–409 (RKRSHAGYQTI) are cytoplasmic.

The protein belongs to the LAMP family. In terms of assembly, interacts with ABCB9; this interaction strongly stabilizes ABCB9 and protects ABCB9 against lysosomal degradation. Interacts with FURIN. Interacts with TMEM175; inhibiting the proton channel activity of TMEM175. Post-translationally, O- and N-glycosylated; some of the N-glycans attached to LAMP-1 are polylactosaminoglycans.

It localises to the lysosome membrane. Its subcellular location is the endosome membrane. It is found in the late endosome membrane. The protein localises to the cell membrane. The protein resides in the cytolytic granule membrane. Its function is as follows. Lysosomal membrane glycoprotein which plays an important role in lysosome biogenesis, lysosomal pH regulation, autophagy and cholesterol homeostasis. Acts as an important regulator of lysosomal lumen pH regulation by acting as a direct inhibitor of the proton channel TMEM175, facilitating lysosomal acidification for optimal hydrolase activity. Also plays an important role in NK-cells cytotoxicity. Mechanistically, participates in cytotoxic granule movement to the cell surface and perforin trafficking to the lytic granule. In addition, protects NK-cells from degranulation-associated damage induced by their own cytotoxic granule content. Presents carbohydrate ligands to selectins. The chain is Lysosome-associated membrane glycoprotein 1 (LAMP1) from Bos taurus (Bovine).